The sequence spans 518 residues: Ankyrin repeat and SOCS box protein 3 (518 aa).

ANK repeat units follow at residues 9–38, 42–71, 78–107, 111–140, 145–174, 178–207, 211–240, 246–275, 279–308, 315–346, and 348–373; these read DTCSTVGLAAREGNVKVLRKLLKKGRSVDV, RGWMPIHEAAYHNSVECLQMLINADSSENY, EGFCALHLAASQGHWKIVQILLEAGADPNA, EETTPLFLAVENGQIDVLRLLLQHGANVNG, CGWNSLHQASFQENAEIIKLLLRKGANKEC, FGITPLFVAAQYGKLESLSILISSGANVNC, DKATPLFIAAQEGHTKCVELLLSSGADPDL, SWQLPIHAAAQMGHTKILDLLIPLTNRACD, NKVSPVYSAVFGGHEDCLEILLRNGYSPDA, GFSSPVCMAFQKDCEFFGIVNILLKYGAQINE, and HLAYCLKYEKFSIFRYFLRKGCSLGP. The 64-residue stretch at 441 to 504 folds into the SOCS box domain; that stretch reads MLSARASNAW…HNYLLYEDVL (64 aa).

The protein belongs to the ankyrin SOCS box (ASB) family. In terms of assembly, interacts with ELOB and TNFRSF1B.

The protein localises to the cytoplasm. Its pathway is protein modification; protein ubiquitination. Functionally, probable substrate-recognition component of a SCF-like ECS (Elongin-Cullin-SOCS-box protein) E3 ubiquitin-protein ligase complex which mediates the ubiquitination and subsequent proteasomal degradation of target proteins. Recognizes TNFRSF1B. Plays a role in the down-regulation of antiviral innate immunity by targeting MAVS for ubiquitin-proteasomal degradation. Also destabilizes TRAF6 by enhancing its 'Lys-48'-linked polyubiquitination. This is Ankyrin repeat and SOCS box protein 3 (ASB3) from Homo sapiens (Human).